Reading from the N-terminus, the 65-residue chain is Small ribosomal subunit protein eS27 (65 aa).

Positions 20, 23, 39, and 42 each coordinate Zn(2+). The C4-type zinc-finger motif lies at 20 to 42 (CIDCGNEQIVFSHPATRVRCNVC).

It belongs to the eukaryotic ribosomal protein eS27 family. Part of the 30S ribosomal subunit. Zn(2+) is required as a cofactor.

The sequence is that of Small ribosomal subunit protein eS27 from Pyrococcus abyssi (strain GE5 / Orsay).